We begin with the raw amino-acid sequence, 301 residues long: Recombination-associated protein RdgC (301 aa).

Belongs to the RdgC family.

The protein localises to the cytoplasm. Its subcellular location is the nucleoid. Functionally, may be involved in recombination. This Xanthomonas oryzae pv. oryzae (strain MAFF 311018) protein is Recombination-associated protein RdgC.